We begin with the raw amino-acid sequence, 310 residues long: Apolipoprotein E (310 aa).

A signal peptide spans 1–18; the sequence is MKVLWAALVVTLLAGCGA. Tandem repeats lie at residues 77–98, 99–120, 121–142, 143–164, 165–186, 187–208, 209–226, and 227–248. The 8 X 22 AA approximate tandem repeats stretch occupies residues 77-248; it reads ALMDDTMKEV…RLDEVREQVQ (172 aa). Residues 155–165 form an LDL and other lipoprotein receptors binding region; the sequence is HLRKMRKRLLR. Heparin is bound at residue 159-162; it reads MRKR. The segment at 207 to 283 is lipid-binding and lipoprotein association; that stretch reads HTLVSKPLQE…SWFEPLVQDM (77 aa). Residue 222–229 participates in heparin binding; sequence AQRLRGRL. A homooligomerization region spans residues 259–310; it reads NQVRLQAEAFQGRLKSWFEPLVQDMQQKWAELVEKVQLAVGAVPTSVPSEKQ. A specificity for association with VLDL region spans residues 271–283; it reads RLKSWFEPLVQDM.

The protein belongs to the apolipoprotein A1/A4/E family. In terms of assembly, homotetramer. May interact with ABCA1; functionally associated with ABCA1 in the biogenesis of HDLs. May interact with APP/A4 amyloid-beta peptide; the interaction is extremely stable in vitro but its physiological significance is unclear. May interact with MAPT. May interact with MAP2. In the cerebrospinal fluid, interacts with secreted SORL1. Interacts with PMEL; this allows the loading of PMEL luminal fragment on ILVs to induce fibril nucleation. APOE exists as multiple glycosylated and sialylated glycoforms within cells and in plasma. The extent of glycosylation and sialylation are tissue and context specific. Post-translationally, glycated in plasma VLDL. In terms of processing, phosphorylated by FAM20C in the extracellular medium.

It is found in the secreted. The protein localises to the extracellular space. It localises to the extracellular matrix. Its subcellular location is the extracellular vesicle. The protein resides in the endosome. It is found in the multivesicular body. Functionally, APOE is an apolipoprotein, a protein associating with lipid particles, that mainly functions in lipoprotein-mediated lipid transport between organs via the plasma and interstitial fluids. APOE is a core component of plasma lipoproteins and is involved in their production, conversion and clearance. Apolipoproteins are amphipathic molecules that interact both with lipids of the lipoprotein particle core and the aqueous environment of the plasma. As such, APOE associates with chylomicrons, chylomicron remnants, very low density lipoproteins (VLDL) and intermediate density lipoproteins (IDL) but shows a preferential binding to high-density lipoproteins (HDL). It also binds a wide range of cellular receptors including the LDL receptor/LDLR and the very low-density lipoprotein receptor/VLDLR that mediate the cellular uptake of the APOE-containing lipoprotein particles. Finally, APOE also has a heparin-binding activity and binds heparan-sulfate proteoglycans on the surface of cells, a property that supports the capture and the receptor-mediated uptake of APOE-containing lipoproteins by cells. The protein is Apolipoprotein E (APOE) of Ceratotherium simum cottoni (Northern white rhinoceros).